Here is a 304-residue protein sequence, read N- to C-terminus: Insulin-like growth factor 1 receptor (304 aa).

Fibronectin type-III domains follow at residues 1–43 (ERTV…TMPA) and 49–142 (IPGP…VQAK). The Extracellular segment spans residues 1–147 (ERTVISNLRP…YVQAKTTYEN (147 aa)). 2 N-linked (GlcNAc...) asparagine glycosylation sites follow: asparagine 115 and asparagine 128. Residues 148 to 168 (FIHLIIALPVAVLLIVGGLVI) form a helical membrane-spanning segment. The Cytoplasmic portion of the chain corresponds to 169–304 (MLYVFHRKRN…HMNGGRKNER (136 aa)). Phosphoserine; by GSK3-beta is present on serine 225. A Phosphoserine modification is found at serine 229. The interval 231–304 (ENKPPEPEEL…HMNGGRKNER (74 aa)) is disordered. Positions 237 to 246 (PEELDLEPEN) are enriched in acidic residues. The segment covering 247-263 (MESVPLDPSASSSSLPL) has biased composition (low complexity). Basic and acidic residues predominate over residues 264-273 (PDRHSGHKAE).

The protein belongs to the protein kinase superfamily. Tyr protein kinase family. Insulin receptor subfamily. Tetramer of 2 alpha and 2 beta chains linked by disulfide bonds. The alpha chains contribute to the formation of the ligand-binding domain, while the beta chain carries the kinase domain. Forms a hybrid receptor with INSR, the hybrid is a tetramer consisting of 1 alpha chain and 1 beta chain of INSR and 1 alpha chain and 1 beta chain of IGF1R. Interacts with ARRB1 and ARRB2. Interacts with GRB10. Interacts with RACK1. Interacts with SOCS1, SOCS2 and SOCS3. Interacts with 14-3-3 proteins. Interacts with NMD2. Interacts with MAP3K5. Interacts with STAT3. Found in a ternary complex with IGF1 and ITGAV:ITGB3 or ITGA6:ITGB4. Interacts (nascent precursor form) with ZFAND2B. In terms of processing, autophosphorylated on tyrosine residues in response to ligand binding. Autophosphorylation occurs in trans, i.e. one subunit of the dimeric receptor phosphorylates tyrosine residues on the other subunit. Autophosphorylation occurs in a sequential manner. While every single phosphorylation increases kinase activity, all three tyrosine residues in the kinase activation loop have to be phosphorylated for optimal activity. Can be autophosphorylated at additional tyrosine residues (in vitro). May also be phosphorylated at tyrosine residues by mTORC2. Autophosphorylated is followed by phosphorylation of juxtamembrane tyrosines and C-terminal serines. Phosphorylation of Ser-225 by GSK-3beta restrains kinase activity and promotes cell surface expression, it requires a priming phosphorylation at Ser-229. Dephosphorylated by PTPN1. Polyubiquitinated in the activation loop through both 'Lys-48' and 'Lys-29' linkages, promoting receptor endocytosis and subsequent degradation by the proteasome. Ubiquitination is facilitated by pre-existing phosphorylation. Post-translationally, sumoylated with SUMO1. In terms of processing, controlled by regulated intramembrane proteolysis (RIP). Undergoes metalloprotease-dependent constitutive ectodomain shedding to produce a membrane-anchored 52 kDa C-Terminal fragment which is further processed by presenilin gamma-secretase to yield an intracellular 50 kDa fragment.

It localises to the cell membrane. The enzyme catalyses L-tyrosyl-[protein] + ATP = O-phospho-L-tyrosyl-[protein] + ADP + H(+). With respect to regulation, activated by autophosphorylation at tyrosines in the kinase activation loop; phosphorylation at all three tyrosine residues is required for optimal kinase activity. Inhibited by MSC1609119A-1, BMS-754807, PQIP, benzimidazole pyridinone, isoquinolinedione, bis-azaindole, 3-cyanoquinoline, 2,4-bis-arylamino-1,3-pyrimidine, pyrrolopyrimidine, pyrrole-5-carboxaldehyde, picropodophyllin (PPP), tyrphostin derivatives. While most inhibitors bind to the ATP binding pocket, MSC1609119A-1 functions as allosteric inhibitor and binds close to the DFG motif and the activation loop. Functionally, receptor tyrosine kinase which mediates actions of insulin-like growth factor 1 (IGF1). Binds IGF1 with high affinity and IGF2 and insulin (INS) with a lower affinity. The activated IGF1R is involved in cell growth and survival control. IGF1R is crucial for tumor transformation and survival of malignant cell. Ligand binding activates the receptor kinase, leading to receptor autophosphorylation, and tyrosines phosphorylation of multiple substrates, that function as signaling adapter proteins including, the insulin-receptor substrates (IRS1/2), Shc and 14-3-3 proteins. Phosphorylation of IRSs proteins lead to the activation of two main signaling pathways: the PI3K-AKT/PKB pathway and the Ras-MAPK pathway. The result of activating the MAPK pathway is increased cellular proliferation, whereas activating the PI3K pathway inhibits apoptosis and stimulates protein synthesis. Phosphorylated IRS1 can activate the 85 kDa regulatory subunit of PI3K (PIK3R1), leading to activation of several downstream substrates, including protein AKT/PKB. AKT phosphorylation, in turn, enhances protein synthesis through mTOR activation and triggers the antiapoptotic effects of IGFIR through phosphorylation and inactivation of BAD. In parallel to PI3K-driven signaling, recruitment of Grb2/SOS by phosphorylated IRS1 or Shc leads to recruitment of Ras and activation of the ras-MAPK pathway. In addition to these two main signaling pathways IGF1R signals also through the Janus kinase/signal transducer and activator of transcription pathway (JAK/STAT). Phosphorylation of JAK proteins can lead to phosphorylation/activation of signal transducers and activators of transcription (STAT) proteins. In particular activation of STAT3, may be essential for the transforming activity of IGF1R. The JAK/STAT pathway activates gene transcription and may be responsible for the transforming activity. JNK kinases can also be activated by the IGF1R. IGF1 exerts inhibiting activities on JNK activation via phosphorylation and inhibition of MAP3K5/ASK1, which is able to directly associate with the IGF1R. When present in a hybrid receptor with INSR, binds IGF1. The polypeptide is Insulin-like growth factor 1 receptor (IGF1R) (Sus scrofa (Pig)).